Reading from the N-terminus, the 687-residue chain is Glycine--tRNA ligase beta subunit (687 aa).

This sequence belongs to the class-II aminoacyl-tRNA synthetase family. As to quaternary structure, tetramer of two alpha and two beta subunits.

It localises to the cytoplasm. The catalysed reaction is tRNA(Gly) + glycine + ATP = glycyl-tRNA(Gly) + AMP + diphosphate. In Lactobacillus acidophilus (strain ATCC 700396 / NCK56 / N2 / NCFM), this protein is Glycine--tRNA ligase beta subunit.